We begin with the raw amino-acid sequence, 390 residues long: Phosphopentomutase (390 aa).

Mn(2+) is bound by residues Asp-11, Asp-283, His-288, Asp-324, His-325, and His-336.

This sequence belongs to the phosphopentomutase family. Mn(2+) is required as a cofactor.

Its subcellular location is the cytoplasm. It carries out the reaction 2-deoxy-alpha-D-ribose 1-phosphate = 2-deoxy-D-ribose 5-phosphate. The enzyme catalyses alpha-D-ribose 1-phosphate = D-ribose 5-phosphate. It participates in carbohydrate degradation; 2-deoxy-D-ribose 1-phosphate degradation; D-glyceraldehyde 3-phosphate and acetaldehyde from 2-deoxy-alpha-D-ribose 1-phosphate: step 1/2. In terms of biological role, isomerase that catalyzes the conversion of deoxy-ribose 1-phosphate (dRib-1-P) and ribose 1-phosphate (Rib-1-P) to deoxy-ribose 5-phosphate (dRib-5-P) and ribose 5-phosphate (Rib-5-P), respectively. In Alkaliphilus metalliredigens (strain QYMF), this protein is Phosphopentomutase.